The following is a 75-amino-acid chain: Protein BRICK1 (75 aa).

At Ala2 the chain carries N-acetylalanine. The stretch at 41 to 72 (MSCRSRLATLNEKLTALERRIEYIEARVTKGE) forms a coiled coil.

Belongs to the BRK1 family. Homotrimer when in free form. Directly interacts with WASF2. Component of the WAVE1 complex composed of ABI2, CYFIP1 or CYFIP2, BRK1, NCKAP1 and WASF1/WAVE1. Within the complex, a heterodimer containing NCKAP1 and CYFIP1 interacts with a heterotrimer formed by WAVE1, ABI2 and BRK1.

The protein resides in the cytoplasm. It localises to the cytoskeleton. In terms of biological role, involved in regulation of actin and microtubule organization. Part of a WAVE complex that activates the Arp2/3 complex. As component of the WAVE1 complex, required for BDNF-NTRK2 endocytic trafficking and signaling from early endosomes. The polypeptide is Protein BRICK1 (BRK1) (Homo sapiens (Human)).